The following is a 277-amino-acid chain: Ubiquinone biosynthesis protein COQ4, mitochondrial (277 aa).

The N-terminal 14 residues, 1 to 14, are a transit peptide targeting the mitochondrion; sequence MLTKRALRTTDPYR. 4 residues coordinate Zn(2+): H157, D158, H161, and E173.

This sequence belongs to the COQ4 family. As to quaternary structure, component of a multi-subunit COQ enzyme complex, composed of at least COQ3, COQ4, COQ5, COQ6, COQ7 and COQ9. Requires Zn(2+) as cofactor.

Its subcellular location is the mitochondrion inner membrane. The catalysed reaction is a 4-hydroxy-3-methoxy-5-(all-trans-polyprenyl)benzoate + H(+) = a 2-methoxy-6-(all-trans-polyprenyl)phenol + CO2. It participates in cofactor biosynthesis; ubiquinone biosynthesis. In terms of biological role, lyase that catalyzes the C1-decarboxylation of 4-hydroxy-3-methoxy-5-(all-trans-polyprenyl)benzoic acid into 2-methoxy-6-(all-trans-polyprenyl)phenol during ubiquinone biosynthesis. The sequence is that of Ubiquinone biosynthesis protein COQ4, mitochondrial from Ajellomyces capsulatus (strain NAm1 / WU24) (Darling's disease fungus).